Consider the following 556-residue polypeptide: (-)-alpha-pinene synthase (556 aa).

Mg(2+)-binding residues include Asp309, Asp313, Asp453, and Glu461. Positions 309–313 (DDMYD) match the DDXXD motif motif.

This sequence belongs to the terpene synthase family. Tpsa subfamily. Requires Mg(2+) as cofactor. It depends on Mn(2+) as a cofactor. Expressed in ripe fruits and roots. Not detected in vegetative tissues.

It is found in the cytoplasm. The protein resides in the cytosol. It catalyses the reaction (2E)-geranyl diphosphate = (1S,5S)-alpha-pinene + diphosphate. It functions in the pathway secondary metabolite biosynthesis; terpenoid biosynthesis. In terms of biological role, monoterpene synthase catalyzing the production of (-)-alpha-pinene, beta-phellandrene and beta-myrcene as the major products. Unable to use farnesyl diphosphate as substrate. Exclusively expressed in the fruit of wild strawberries. Not detected in cultivated varieties. This chain is (-)-alpha-pinene synthase, found in Fragaria vesca (Woodland strawberry).